The sequence spans 198 residues: Na(+)-translocating NADH-quinone reductase subunit E (198 aa).

The next 6 helical transmembrane spans lie at serine 11 to valine 31, phenylalanine 39 to valine 59, phenylalanine 77 to isoleucine 97, glycine 110 to valine 130, valine 140 to isoleucine 160, and leucine 176 to valine 196.

Belongs to the NqrDE/RnfAE family. In terms of assembly, composed of six subunits; NqrA, NqrB, NqrC, NqrD, NqrE and NqrF.

Its subcellular location is the cell inner membrane. It carries out the reaction a ubiquinone + n Na(+)(in) + NADH + H(+) = a ubiquinol + n Na(+)(out) + NAD(+). Functionally, NQR complex catalyzes the reduction of ubiquinone-1 to ubiquinol by two successive reactions, coupled with the transport of Na(+) ions from the cytoplasm to the periplasm. NqrA to NqrE are probably involved in the second step, the conversion of ubisemiquinone to ubiquinol. The protein is Na(+)-translocating NADH-quinone reductase subunit E of Aliivibrio fischeri (strain ATCC 700601 / ES114) (Vibrio fischeri).